Reading from the N-terminus, the 163-residue chain is Nucleotide-binding protein Noca_0564 (163 aa).

The protein belongs to the YajQ family.

Nucleotide-binding protein. This Nocardioides sp. (strain ATCC BAA-499 / JS614) protein is Nucleotide-binding protein Noca_0564.